Here is a 723-residue protein sequence, read N- to C-terminus: Threonine--tRNA ligase 1, cytoplasmic (723 aa).

The disordered stretch occupies residues Met1–Glu46. Over residues Gly14–Ser39 the composition is skewed to basic and acidic residues. Ser39 bears the Phosphoserine mark. The region spanning Asp79–Lys143 is the TGS domain. Lys243 is subject to N6-acetyllysine. At Thr246 the chain carries Phosphothreonine. Tyr298 carries the post-translational modification Phosphotyrosine. A Phosphothreonine modification is found at Thr453. At Ser702 the chain carries Phosphoserine.

This sequence belongs to the class-II aminoacyl-tRNA synthetase family. As to quaternary structure, homodimer. ISGylated.

The protein localises to the cytoplasm. It catalyses the reaction tRNA(Thr) + L-threonine + ATP = L-threonyl-tRNA(Thr) + AMP + diphosphate + H(+). Its activity is regulated as follows. Inhibited by borrelidin (BN, IC 50 is 7 nM), which binds to 4 distinct subsites in the protein, preventing binding of all 3 substrates. Catalyzes the attachment of threonine to tRNA(Thr) in a two-step reaction: threonine is first activated by ATP to form Thr-AMP and then transferred to the acceptor end of tRNA(Thr). Also edits incorrectly charged tRNA(Thr) via its editing domain, at the post-transfer stage. This Homo sapiens (Human) protein is Threonine--tRNA ligase 1, cytoplasmic.